Reading from the N-terminus, the 477-residue chain is Protein translocase subunit SecY (477 aa).

Helical transmembrane passes span 28-48 (FMISFLITVVLLVLFRVLAII), 67-89 (FFSLFNLLGGGGLNQLSLFAVGI), 130-150 (IITLPFALVQSFAVIQIATNS), 165-185 (DFVAFYIIAMTAGTYLSVFLG), 196-216 (GITLLILSGILAQLPEGFIAA), 234-254 (AISFFIYFMAFVTLLFATTFI), 286-306 (SAGVIPVIFASSIMSIPVTIA), 329-349 (GIVLYGILVILFSFFYSYIQI), 387-407 (FIGAPFLTVIAIIPYIVSALI), and 413-433 (LSLGGTGIIIIVTAVVEFMSA).

Belongs to the SecY/SEC61-alpha family. As to quaternary structure, component of the Sec protein translocase complex. Heterotrimer consisting of SecY, SecE and SecG subunits. The heterotrimers can form oligomers, although 1 heterotrimer is thought to be able to translocate proteins. Interacts with the ribosome. Interacts with SecDF, and other proteins may be involved. Interacts with SecA.

It is found in the cell membrane. The central subunit of the protein translocation channel SecYEG. Consists of two halves formed by TMs 1-5 and 6-10. These two domains form a lateral gate at the front which open onto the bilayer between TMs 2 and 7, and are clamped together by SecE at the back. The channel is closed by both a pore ring composed of hydrophobic SecY resides and a short helix (helix 2A) on the extracellular side of the membrane which forms a plug. The plug probably moves laterally to allow the channel to open. The ring and the pore may move independently. The polypeptide is Protein translocase subunit SecY (Mycoplasma pneumoniae (strain ATCC 29342 / M129 / Subtype 1) (Mycoplasmoides pneumoniae)).